Reading from the N-terminus, the 66-residue chain is Large ribosomal subunit protein bL35 (66 aa).

Over residues 1-26 (MPKMKTHRGAAKRVKRTGSGKLKRSR) the composition is skewed to basic residues. Positions 1 to 49 (MPKMKTHRGAAKRVKRTGSGKLKRSRAFTSHLFANKSTKQKRKLRKASL) are disordered.

It belongs to the bacterial ribosomal protein bL35 family.

This is Large ribosomal subunit protein bL35 from Staphylococcus saprophyticus subsp. saprophyticus (strain ATCC 15305 / DSM 20229 / NCIMB 8711 / NCTC 7292 / S-41).